Here is a 60-residue protein sequence, read N- to C-terminus: Beta-defensin 8 (60 aa).

The signal sequence occupies residues 1–22 (MRIHYLLFTFLLVLLSPLAAFS). Positions 23–25 (QKI) are excised as a propeptide. 3 disulfides stabilise this stretch: Cys-31–Cys-58, Cys-38–Cys-52, and Cys-42–Cys-59.

It belongs to the beta-defensin family. Most highly expressed in testis and heart.

It localises to the secreted. A synthetic peptide displays antimicrobial activities against S.aureus, P.aeruginosa, E.coli and B.cepacia. The antimicrobial activity against S.aureus, E.coli and B.cepacia is reduced in raised concentration of NaCl, but its action against P.aeruginosa is independent of NaCl concentration. The sequence is that of Beta-defensin 8 (Defb8) from Mus musculus (Mouse).